We begin with the raw amino-acid sequence, 120 residues long: Histone H2B (120 aa).

Residues 1–26 (MAEPAKKKPKKLPKKDKGQKDIKRKK) are disordered. Ala-2 carries the post-translational modification Blocked amino end (Ala). An N6-acetyllysine mark is found at Lys-7, Lys-10, and Lys-11. Residue Lys-115 forms a Glycyl lysine isopeptide (Lys-Gly) (interchain with G-Cter in ubiquitin) linkage.

It belongs to the histone H2B family. In terms of assembly, the nucleosome is a histone octamer containing two molecules each of H2A, H2B, H3 and H4 assembled in one H3-H4 heterotetramer and two H2A-H2B heterodimers. The octamer wraps approximately 147 bp of DNA. Post-translationally, can be acetylated to form H2BK6ac, H2BK33ac and H2BK34ac. In terms of processing, monoubiquitinated to form H2BK143ub1; may give a specific tag for epigenetic transcriptional activation.

The protein resides in the nucleus. The protein localises to the chromosome. Its function is as follows. Core component of nucleosome. Nucleosomes wrap and compact DNA into chromatin, limiting DNA accessibility to the cellular machineries which require DNA as a template. Histones thereby play a central role in transcription regulation, DNA repair, DNA replication and chromosomal stability. DNA accessibility is regulated via a complex set of post-translational modifications of histones, also called histone code, and nucleosome remodeling. This chain is Histone H2B, found in Pisum sativum (Garden pea).